Consider the following 139-residue polypeptide: Ribonuclease P protein component (139 aa).

The interval 120 to 139 (KPTTGVEYSPKNEKCESVLP) is disordered. The segment covering 129–139 (PKNEKCESVLP) has biased composition (basic and acidic residues).

Belongs to the RnpA family. As to quaternary structure, consists of a catalytic RNA component (M1 or rnpB) and a protein subunit.

The catalysed reaction is Endonucleolytic cleavage of RNA, removing 5'-extranucleotides from tRNA precursor.. Its function is as follows. RNaseP catalyzes the removal of the 5'-leader sequence from pre-tRNA to produce the mature 5'-terminus. It can also cleave other RNA substrates such as 4.5S RNA. The protein component plays an auxiliary but essential role in vivo by binding to the 5'-leader sequence and broadening the substrate specificity of the ribozyme. The protein is Ribonuclease P protein component of Chlamydia caviae (strain ATCC VR-813 / DSM 19441 / 03DC25 / GPIC) (Chlamydophila caviae).